The sequence spans 332 residues: Leucine carboxyl methyltransferase 1 (332 aa).

The disordered stretch occupies residues 1 to 23 (MAASLRRPSFTTCSSPTDTDDEG). S-adenosyl-L-methionine contacts are provided by residues Arg71, Gly96, Asp120, 169–170 (DL), and Glu196.

It belongs to the methyltransferase superfamily. LCMT family.

It catalyses the reaction [phosphatase 2A protein]-C-terminal L-leucine + S-adenosyl-L-methionine = [phosphatase 2A protein]-C-terminal L-leucine methyl ester + S-adenosyl-L-homocysteine. Its function is as follows. Methylates the carboxyl group of the C-terminal leucine residue of protein phosphatase 2A catalytic subunits to form alpha-leucine ester residues. This Bos taurus (Bovine) protein is Leucine carboxyl methyltransferase 1 (LCMT1).